Consider the following 142-residue polypeptide: Small ribosomal subunit protein uS12 (142 aa).

The protein belongs to the universal ribosomal protein uS12 family. In terms of assembly, part of the 30S ribosomal subunit.

In terms of biological role, with S4 and S5 plays an important role in translational accuracy. Located at the interface of the 30S and 50S subunits. The protein is Small ribosomal subunit protein uS12 of Thermoplasma acidophilum (strain ATCC 25905 / DSM 1728 / JCM 9062 / NBRC 15155 / AMRC-C165).